The primary structure comprises 119 residues: Large ribosomal subunit protein bL20 (119 aa).

This sequence belongs to the bacterial ribosomal protein bL20 family.

Functionally, binds directly to 23S ribosomal RNA and is necessary for the in vitro assembly process of the 50S ribosomal subunit. It is not involved in the protein synthesizing functions of that subunit. In Burkholderia cenocepacia (strain HI2424), this protein is Large ribosomal subunit protein bL20.